Consider the following 252-residue polypeptide: Probable phosphatase SO_1652 (252 aa).

Positions 8, 10, 16, 41, 74, 102, 132, 193, and 195 each coordinate Zn(2+).

It belongs to the PHP family. Zn(2+) is required as a cofactor.

The chain is Probable phosphatase SO_1652 from Shewanella oneidensis (strain ATCC 700550 / JCM 31522 / CIP 106686 / LMG 19005 / NCIMB 14063 / MR-1).